A 298-amino-acid polypeptide reads, in one-letter code: Acetyl-coenzyme A carboxylase carboxyl transferase subunit beta (298 aa).

A CoA carboxyltransferase N-terminal domain is found at 26-295 (LWIKCPETGE…DNANAVVPLA (270 aa)).

This sequence belongs to the AccD/PCCB family. As to quaternary structure, acetyl-CoA carboxylase is a heterohexamer composed of biotin carboxyl carrier protein (AccB), biotin carboxylase (AccC) and two subunits each of ACCase subunit alpha (AccA) and ACCase subunit beta (AccD).

Its subcellular location is the cytoplasm. The enzyme catalyses N(6)-carboxybiotinyl-L-lysyl-[protein] + acetyl-CoA = N(6)-biotinyl-L-lysyl-[protein] + malonyl-CoA. It participates in lipid metabolism; malonyl-CoA biosynthesis; malonyl-CoA from acetyl-CoA: step 1/1. Functionally, component of the acetyl coenzyme A carboxylase (ACC) complex. Biotin carboxylase (BC) catalyzes the carboxylation of biotin on its carrier protein (BCCP) and then the CO(2) group is transferred by the transcarboxylase to acetyl-CoA to form malonyl-CoA. The protein is Acetyl-coenzyme A carboxylase carboxyl transferase subunit beta of Agrobacterium fabrum (strain C58 / ATCC 33970) (Agrobacterium tumefaciens (strain C58)).